We begin with the raw amino-acid sequence, 405 residues long: Multifunctional CCA protein (405 aa).

ATP is bound by residues glycine 8 and arginine 11. The CTP site is built by glycine 8 and arginine 11. Positions 21 and 23 each coordinate Mg(2+). ATP contacts are provided by arginine 91, arginine 137, and arginine 140. The CTP site is built by arginine 91, arginine 137, and arginine 140. Residues 228-329 (TGIHSMMVLE…NDFLDKCDVW (102 aa)) form the HD domain.

This sequence belongs to the tRNA nucleotidyltransferase/poly(A) polymerase family. Bacterial CCA-adding enzyme type 1 subfamily. Monomer. Can also form homodimers and oligomers. Requires Mg(2+) as cofactor. Ni(2+) serves as cofactor.

The catalysed reaction is a tRNA precursor + 2 CTP + ATP = a tRNA with a 3' CCA end + 3 diphosphate. It carries out the reaction a tRNA with a 3' CCA end + 2 CTP + ATP = a tRNA with a 3' CCACCA end + 3 diphosphate. In terms of biological role, catalyzes the addition and repair of the essential 3'-terminal CCA sequence in tRNAs without using a nucleic acid template. Adds these three nucleotides in the order of C, C, and A to the tRNA nucleotide-73, using CTP and ATP as substrates and producing inorganic pyrophosphate. tRNA 3'-terminal CCA addition is required both for tRNA processing and repair. Also involved in tRNA surveillance by mediating tandem CCA addition to generate a CCACCA at the 3' terminus of unstable tRNAs. While stable tRNAs receive only 3'-terminal CCA, unstable tRNAs are marked with CCACCA and rapidly degraded. The sequence is that of Multifunctional CCA protein from Pseudoalteromonas atlantica (strain T6c / ATCC BAA-1087).